A 104-amino-acid chain; its full sequence is Large ribosomal subunit protein bL21 (104 aa).

Belongs to the bacterial ribosomal protein bL21 family. Part of the 50S ribosomal subunit. Contacts protein L20.

In terms of biological role, this protein binds to 23S rRNA in the presence of protein L20. The polypeptide is Large ribosomal subunit protein bL21 (Rhodopirellula baltica (strain DSM 10527 / NCIMB 13988 / SH1)).